Consider the following 246-residue polypeptide: Ribosomal RNA small subunit methyltransferase J (246 aa).

S-adenosyl-L-methionine contacts are provided by residues 115–116 and D169; that span reads ER.

The protein belongs to the methyltransferase superfamily. RsmJ family.

It is found in the cytoplasm. The catalysed reaction is guanosine(1516) in 16S rRNA + S-adenosyl-L-methionine = N(2)-methylguanosine(1516) in 16S rRNA + S-adenosyl-L-homocysteine + H(+). In terms of biological role, specifically methylates the guanosine in position 1516 of 16S rRNA. This Buchnera aphidicola subsp. Acyrthosiphon pisum (strain APS) (Acyrthosiphon pisum symbiotic bacterium) protein is Ribosomal RNA small subunit methyltransferase J.